The following is a 427-amino-acid chain: Chaperone SurA (427 aa).

The first 19 residues, 1–19 (MKIWKSILFTTLLSCGAVA), serve as a signal peptide directing secretion. 2 consecutive PpiC domains span residues 170-268 (TVQY…KIED) and 277-377 (VTEV…EVLD).

It is found in the periplasm. The catalysed reaction is [protein]-peptidylproline (omega=180) = [protein]-peptidylproline (omega=0). Functionally, chaperone involved in the correct folding and assembly of outer membrane proteins. Recognizes specific patterns of aromatic residues and the orientation of their side chains, which are found more frequently in integral outer membrane proteins. May act in both early periplasmic and late outer membrane-associated steps of protein maturation. The sequence is that of Chaperone SurA from Vibrio parahaemolyticus serotype O3:K6 (strain RIMD 2210633).